Consider the following 79-residue polypeptide: Acyl carrier protein (79 aa).

The Carrier domain occupies Met-1–Asn-77. Ser-37 bears the O-(pantetheine 4'-phosphoryl)serine mark.

It belongs to the acyl carrier protein (ACP) family. 4'-phosphopantetheine is transferred from CoA to a specific serine of apo-ACP by AcpS. This modification is essential for activity because fatty acids are bound in thioester linkage to the sulfhydryl of the prosthetic group.

The protein resides in the cytoplasm. Its pathway is lipid metabolism; fatty acid biosynthesis. Its function is as follows. Carrier of the growing fatty acid chain in fatty acid biosynthesis. The chain is Acyl carrier protein from Buchnera aphidicola subsp. Schizaphis graminum (strain Sg).